A 363-amino-acid chain; its full sequence is MSDSSRSLIPSFLYSSDHRLFQATTMSTHLKSQPLISPTNSSVSSNGTSFAIATPNEKVEMYSPAYFAACTVAGMLSCGITHTAITPLDVIKCNMQIDPLKYKNITSAFKTTIKEQGLKGFTRGWSPTLLGYSAQGAFKYGLYEYAKKYYSDIVGPEYAAKYKTLIYLAGSASAEIVADVALCPMEAVKVRVQTQPGFARGLSDGLPKIIKSEGFRGLHKGLVPLWGRQIPYTMMKFATFENTVELIYKKVMPTPKEECSKPVQLGVSFAGGYIAGIFCAIISHPADNLVSFLNNSKGATVADAVKRLGLWGMLTRGLPLRIFMIGTLTGAQWVIYDAVKVLAGLPTTGGASPATALAPSVSA.

Residues 65 to 85 (AYFAACTVAGMLSCGITHTAI) traverse the membrane as a helical segment. Solcar repeat units follow at residues 65–149 (AYFA…AKKY), 162–246 (YKTL…TVEL), and 263–342 (VQLG…VKVL). The Mitochondrial matrix segment spans residues 86–123 (TPLDVIKCNMQIDPLKYKNITSAFKTTIKEQGLKGFTR). Residues 124 to 143 (GWSPTLLGYSAQGAFKYGLY) form a helical membrane-spanning segment. Residues 144–164 (EYAKKYYSDIVGPEYAAKYKT) are Mitochondrial intermembrane-facing. Residues 165-185 (LIYLAGSASAEIVADVALCPM) form a helical membrane-spanning segment. Residues 186 to 220 (EAVKVRVQTQPGFARGLSDGLPKIIKSEGFRGLHK) lie on the Mitochondrial matrix side of the membrane. Residues 221–240 (GLVPLWGRQIPYTMMKFATF) form a helical membrane-spanning segment. Topologically, residues 241–261 (ENTVELIYKKVMPTPKEECSK) are mitochondrial intermembrane. Residues 262–282 (PVQLGVSFAGGYIAGIFCAII) traverse the membrane as a helical segment. The Mitochondrial matrix portion of the chain corresponds to 283 to 321 (SHPADNLVSFLNNSKGATVADAVKRLGLWGMLTRGLPLR). Residues 322-342 (IFMIGTLTGAQWVIYDAVKVL) traverse the membrane as a helical segment. Over 343-363 (AGLPTTGGASPATALAPSVSA) the chain is Mitochondrial intermembrane.

It belongs to the mitochondrial carrier (TC 2.A.29) family. As to expression, expressed in leaves. Strong expression in senescent leaves.

It localises to the mitochondrion inner membrane. In terms of biological role, transport of phosphate groups from the cytosol to the mitochondrial matrix. Mediates salt stress tolerance through an ATP-dependent pathway and via modulation of the gibberellin metabolism. The chain is Mitochondrial phosphate carrier protein 2, mitochondrial (MPT2) from Arabidopsis thaliana (Mouse-ear cress).